The chain runs to 255 residues: BTB/POZ domain-containing protein kctd15 (255 aa).

The BTB domain occupies 30-100 (APVHIDVGGH…LRTSKLLLPE (71 aa)).

Forms oligomers, predominantly homopentamers. Interacts with TFAP2A; this interaction inhibits TFAP2A transcriptional activation.

Its subcellular location is the nucleus. In terms of biological role, during embryonic development, interferes with neural crest formation. Inhibits AP2 transcriptional activity by interaction with its activation domain. This chain is BTB/POZ domain-containing protein kctd15 (kctd15), found in Xenopus tropicalis (Western clawed frog).